A 126-amino-acid polypeptide reads, in one-letter code: Probable DNA-directed RNA polymerase II subunit RPB11 (126 aa).

It belongs to the archaeal Rpo11/eukaryotic RPB11/RPC19 RNA polymerase subunit family. In terms of assembly, component of the RNA polymerase II (Pol II) complex consisting of 12 subunits.

Its subcellular location is the nucleus. In terms of biological role, DNA-dependent RNA polymerase catalyzes the transcription of DNA into RNA using the four ribonucleoside triphosphates as substrates. Component of RNA polymerase II which synthesizes mRNA precursors and many functional non-coding RNAs. Pol II is the central component of the basal RNA polymerase II transcription machinery. It is composed of mobile elements that move relative to each other. RPB11 is part of the core element with the central large cleft. The chain is Probable DNA-directed RNA polymerase II subunit RPB11 from Plasmodium falciparum (isolate 3D7).